A 203-amino-acid chain; its full sequence is Protein-methionine-sulfoxide reductase heme-binding subunit MsrQ (203 aa).

6 consecutive transmembrane segments (helical) span residues 10–30, 42–62, 75–95, 110–130, 147–167, and 169–189; these read IFVV…MSLL, LGLG…LQKL, LGLW…FFIL, PYII…ITSN, LVYA…RSDL, and EWSI…PAVA.

The protein belongs to the MsrQ family. Heterodimer of a catalytic subunit (MsrP) and a heme-binding subunit (MsrQ). FMN is required as a cofactor. It depends on heme b as a cofactor.

Its subcellular location is the cell inner membrane. Its function is as follows. Part of the MsrPQ system that repairs oxidized periplasmic proteins containing methionine sulfoxide residues (Met-O), using respiratory chain electrons. Thus protects these proteins from oxidative-stress damage caused by reactive species of oxygen and chlorine generated by the host defense mechanisms. MsrPQ is essential for the maintenance of envelope integrity under bleach stress, rescuing a wide series of structurally unrelated periplasmic proteins from methionine oxidation. MsrQ provides electrons for reduction to the reductase catalytic subunit MsrP, using the quinone pool of the respiratory chain. This chain is Protein-methionine-sulfoxide reductase heme-binding subunit MsrQ, found in Pseudomonas putida (strain GB-1).